The primary structure comprises 783 residues: Endonuclease MutS2 (783 aa).

328–335 (GPNTGGKT) contributes to the ATP binding site. The region spanning 708–783 (LDLRGKRYEE…GSGCTIATLG (76 aa)) is the Smr domain.

The protein belongs to the DNA mismatch repair MutS family. MutS2 subfamily. As to quaternary structure, homodimer. Binds to stalled ribosomes, contacting rRNA.

Its function is as follows. Endonuclease that is involved in the suppression of homologous recombination and thus may have a key role in the control of bacterial genetic diversity. Functionally, acts as a ribosome collision sensor, splitting the ribosome into its 2 subunits. Detects stalled/collided 70S ribosomes which it binds and splits by an ATP-hydrolysis driven conformational change. Acts upstream of the ribosome quality control system (RQC), a ribosome-associated complex that mediates the extraction of incompletely synthesized nascent chains from stalled ribosomes and their subsequent degradation. Probably generates substrates for RQC. This is Endonuclease MutS2 from Streptococcus thermophilus (strain ATCC BAA-250 / LMG 18311).